The chain runs to 74 residues: Defensin J1-2 (74 aa).

An N-terminal signal peptide occupies residues 1–27; the sequence is MAGFSKVIATIFLMMMLVFATGMVAEA. Cystine bridges form between C30–C74, C41–C61, C47–C68, and C51–C70.

Belongs to the DEFL family. Monomer. In terms of tissue distribution, expressed in flowers and in young fruits.

It is found in the secreted. Plant defense peptide with antifungal activity against F.oxysporum and B.cinerea. This is Defensin J1-2 from Capsicum annuum (Capsicum pepper).